A 44-amino-acid polypeptide reads, in one-letter code: Photosystem I reaction center subunit IX (44 aa).

The chain crosses the membrane as a helical span at residues 7–27; the sequence is YLSVAPVLATLWFGSLAGLLI.

Belongs to the PsaJ family.

The protein localises to the plastid. It is found in the chloroplast thylakoid membrane. May help in the organization of the PsaE and PsaF subunits. The protein is Photosystem I reaction center subunit IX of Illicium oligandrum (Star anise).